The following is a 160-amino-acid chain: Cytochrome b6-f complex subunit 4 (160 aa).

3 helical membrane-spanning segments follow: residues 36–56, 95–115, and 131–151; these read LLYIFPVVIFGTIACNVGLAV, LLGVLLMAAVPAGLLTVPFLE, and TVFLFGTVVALWLGIGAALPI.

Belongs to the cytochrome b family. PetD subfamily. As to quaternary structure, the 4 large subunits of the cytochrome b6-f complex are cytochrome b6, subunit IV (17 kDa polypeptide, petD), cytochrome f and the Rieske protein, while the 4 small subunits are petG, petL, petM and petN. The complex functions as a dimer.

It localises to the plastid. Its subcellular location is the chloroplast thylakoid membrane. Its function is as follows. Component of the cytochrome b6-f complex, which mediates electron transfer between photosystem II (PSII) and photosystem I (PSI), cyclic electron flow around PSI, and state transitions. This Spirogyra maxima (Green alga) protein is Cytochrome b6-f complex subunit 4.